A 429-amino-acid polypeptide reads, in one-letter code: SH2 domain-containing protein 5 (429 aa).

In terms of domain architecture, SH2 spans 302–398 (WAFAGLSRSC…LSMGRLNPTY (97 aa)).

In terms of assembly, interacts with BCR. In terms of tissue distribution, highly expressed in brain, particularly in Purkinjie cells in the cerebellum and the cornu ammonis of the hippocampus.

Its subcellular location is the postsynaptic density. May be involved in synaptic plasticity regulation through the control of Rac-GTP levels. The protein is SH2 domain-containing protein 5 of Mus musculus (Mouse).